Here is a 157-residue protein sequence, read N- to C-terminus: Protein Smg (157 aa).

The protein belongs to the Smg family.

In Escherichia coli O8 (strain IAI1), this protein is Protein Smg.